Reading from the N-terminus, the 115-residue chain is MIGIDIVSIARVERCVKRFKMKFLERFLSPSEILLCRDKSSTIAGFFALKEACSKALQVGIGKELSFLDMCISKSPKNAPLITLSKEKMNYFNIQSLSASISHDAGFAIAVVVVS.

Mg(2+) contacts are provided by Asp-5 and Glu-51.

This sequence belongs to the P-Pant transferase superfamily. AcpS family. The cofactor is Mg(2+).

The protein localises to the cytoplasm. It catalyses the reaction apo-[ACP] + CoA = holo-[ACP] + adenosine 3',5'-bisphosphate + H(+). In terms of biological role, transfers the 4'-phosphopantetheine moiety from coenzyme A to a Ser of acyl-carrier-protein. The chain is Holo-[acyl-carrier-protein] synthase from Helicobacter acinonychis (strain Sheeba).